Here is a 146-residue protein sequence, read N- to C-terminus: Cytochrome c oxidase assembly factor 1 homolog (146 aa).

Residues 1 to 14 are Mitochondrial matrix-facing; it reads MMWQKYAGSRRSMP. A helical transmembrane segment spans residues 15–37; it reads LGARILFHGVFYAGGFAIVYYLI. Topologically, residues 38-146 are mitochondrial intermembrane; sequence QKFHSRALYY…GENGDEVKKE (109 aa).

Belongs to the COA1 family. As to quaternary structure, component of the MITRAC (mitochondrial translation regulation assembly intermediate of cytochrome c oxidase complex) complex, the core components of this complex being COA3/MITRAC12 and COX14. Interacts with COX17 and COA6. Part of the mitochondrial complex I assembly/MCIA complex that comprises at least the core subunits TMEM126B, NDUFAF1, ECSIT and ACAD9 and complement subunits such as COA1 and TMEM186.

Its subcellular location is the mitochondrion inner membrane. In terms of biological role, component of the MITRAC (mitochondrial translation regulation assembly intermediate of cytochrome c oxidase complex) complex, that regulates cytochrome c oxidase assembly. MITRAC complexes regulate both translation of mitochondrial encoded components and assembly of nuclear-encoded components imported in mitochondrion. Required for assembly of mitochondrial respiratory chain complex I and complex IV. As part of the MCIA complex, required for efficient assembly of the mitochondrial complex I. In Homo sapiens (Human), this protein is Cytochrome c oxidase assembly factor 1 homolog.